A 329-amino-acid polypeptide reads, in one-letter code: Lipoyl synthase (329 aa).

A disordered region spans residues 1–23; sequence MTDLTATPAPAEPAASAYDPTAK. 7 residues coordinate [4Fe-4S] cluster: Cys-76, Cys-81, Cys-87, Cys-102, Cys-106, Cys-109, and Ser-316. Residues 87-305 enclose the Radical SAM core domain; sequence CFGKGTATFM…EEEAYKMGFT (219 aa).

Belongs to the radical SAM superfamily. Lipoyl synthase family. [4Fe-4S] cluster is required as a cofactor.

The protein localises to the cytoplasm. It carries out the reaction [[Fe-S] cluster scaffold protein carrying a second [4Fe-4S](2+) cluster] + N(6)-octanoyl-L-lysyl-[protein] + 2 oxidized [2Fe-2S]-[ferredoxin] + 2 S-adenosyl-L-methionine + 4 H(+) = [[Fe-S] cluster scaffold protein] + N(6)-[(R)-dihydrolipoyl]-L-lysyl-[protein] + 4 Fe(3+) + 2 hydrogen sulfide + 2 5'-deoxyadenosine + 2 L-methionine + 2 reduced [2Fe-2S]-[ferredoxin]. It participates in protein modification; protein lipoylation via endogenous pathway; protein N(6)-(lipoyl)lysine from octanoyl-[acyl-carrier-protein]: step 2/2. Catalyzes the radical-mediated insertion of two sulfur atoms into the C-6 and C-8 positions of the octanoyl moiety bound to the lipoyl domains of lipoate-dependent enzymes, thereby converting the octanoylated domains into lipoylated derivatives. This chain is Lipoyl synthase, found in Burkholderia pseudomallei (strain 1106a).